A 265-amino-acid chain; its full sequence is Ubiquinone biosynthesis protein COQ4 homolog, mitochondrial (265 aa).

The transit peptide at 1–30 (MMQRSWQSWRRGLTLGLASRRSYVASVEAP) directs the protein to the mitochondrion. Zn(2+) is bound by residues His-170, Asp-171, His-174, and Glu-186.

The protein belongs to the COQ4 family. Component of a multi-subunit COQ enzyme complex. Requires Zn(2+) as cofactor.

The protein resides in the mitochondrion inner membrane. It carries out the reaction a 4-hydroxy-3-methoxy-5-(all-trans-polyprenyl)benzoate + H(+) = a 2-methoxy-6-(all-trans-polyprenyl)phenol + CO2. It participates in cofactor biosynthesis; ubiquinone biosynthesis. In terms of biological role, lyase that catalyzes the C1-decarboxylation of 4-hydroxy-3-methoxy-5-(all-trans-polyprenyl)benzoic acid into 2-methoxy-6-(all-trans-polyprenyl)phenol during ubiquinone biosynthesis. The polypeptide is Ubiquinone biosynthesis protein COQ4 homolog, mitochondrial (Drosophila virilis (Fruit fly)).